Consider the following 215-residue polypeptide: Variable small protein 2 (215 aa).

An N-terminal signal peptide occupies residues 1–18; the sequence is MRKRISAIIMTLFMVFMS. The N-palmitoyl cysteine moiety is linked to residue Cys19. Cys19 carries S-diacylglycerol cysteine lipidation.

Belongs to the variable small protein (Vsp) family.

It is found in the cell outer membrane. In terms of biological role, the Vlp and Vsp proteins are antigenically distinct proteins, only one vlp or vsp gene is transcriptionally active at any one time. Switching between these genes is a mechanism of host immune response evasion. This Borrelia hermsii protein is Variable small protein 2.